Here is a 105-residue protein sequence, read N- to C-terminus: Large ribosomal subunit protein uL24 (105 aa).

The protein belongs to the universal ribosomal protein uL24 family. In terms of assembly, part of the 50S ribosomal subunit.

In terms of biological role, one of two assembly initiator proteins, it binds directly to the 5'-end of the 23S rRNA, where it nucleates assembly of the 50S subunit. Its function is as follows. One of the proteins that surrounds the polypeptide exit tunnel on the outside of the subunit. This Staphylococcus epidermidis (strain ATCC 35984 / DSM 28319 / BCRC 17069 / CCUG 31568 / BM 3577 / RP62A) protein is Large ribosomal subunit protein uL24.